The primary structure comprises 366 residues: tRNA/tmRNA (uracil-C(5))-methyltransferase (366 aa).

S-adenosyl-L-methionine contacts are provided by glutamine 190, tyrosine 218, asparagine 223, glutamate 239, and aspartate 299. The active-site Nucleophile is the cysteine 324. Glutamate 358 functions as the Proton acceptor in the catalytic mechanism.

Belongs to the class I-like SAM-binding methyltransferase superfamily. RNA M5U methyltransferase family. TrmA subfamily.

It carries out the reaction uridine(54) in tRNA + S-adenosyl-L-methionine = 5-methyluridine(54) in tRNA + S-adenosyl-L-homocysteine + H(+). The catalysed reaction is uridine(341) in tmRNA + S-adenosyl-L-methionine = 5-methyluridine(341) in tmRNA + S-adenosyl-L-homocysteine + H(+). In terms of biological role, dual-specificity methyltransferase that catalyzes the formation of 5-methyluridine at position 54 (m5U54) in all tRNAs, and that of position 341 (m5U341) in tmRNA (transfer-mRNA). The sequence is that of tRNA/tmRNA (uracil-C(5))-methyltransferase from Escherichia coli (strain UTI89 / UPEC).